Reading from the N-terminus, the 115-residue chain is Evasin P1181 (115 aa).

The signal sequence occupies residues methionine 1–leucine 25. 4 cysteine pairs are disulfide-bonded: cysteine 38/cysteine 58, cysteine 54/cysteine 94, cysteine 70/cysteine 99, and cysteine 89/cysteine 108. N-linked (GlcNAc...) asparagine glycans are attached at residues asparagine 45, asparagine 72, and asparagine 103.

The protein localises to the secreted. Its function is as follows. Salivary chemokine-binding protein which binds to host chemokines CCL3 and CCL4. The polypeptide is Evasin P1181 (Amblyomma maculatum (Gulf Coast tick)).